Reading from the N-terminus, the 445-residue chain is UPF0210 protein SMU_73 (445 aa).

It belongs to the UPF0210 family. Homodimer.

This is UPF0210 protein SMU_73 from Streptococcus mutans serotype c (strain ATCC 700610 / UA159).